A 100-amino-acid chain; its full sequence is Large ribosomal subunit protein uL23 (100 aa).

Belongs to the universal ribosomal protein uL23 family. As to quaternary structure, part of the 50S ribosomal subunit. Contacts protein L29, and trigger factor when it is bound to the ribosome.

Its function is as follows. One of the early assembly proteins it binds 23S rRNA. One of the proteins that surrounds the polypeptide exit tunnel on the outside of the ribosome. Forms the main docking site for trigger factor binding to the ribosome. The protein is Large ribosomal subunit protein uL23 of Lacticaseibacillus casei (strain BL23) (Lactobacillus casei).